The sequence spans 313 residues: LOB domain-containing protein 36 (313 aa).

The region spanning 6-107 is the LOB domain; that stretch reads SPCAACKFLR…HDLENAKKEL (102 aa). The segment at 245 to 313 is disordered; sequence GNFVDSPSTN…SEEGRRNVIG (69 aa). The span at 249–260 shows a compositional bias: polar residues; sequence DSPSTNNNYHTD. The span at 280 to 302 shows a compositional bias: low complexity; that stretch reads PSQSSQPLPLQTQETQTQTQPNS.

Belongs to the LOB domain-containing protein family. In terms of tissue distribution, expressed in trichomes, at the base of many lateral organs, including branching points of the inflorescence and floral organs and in the distal part of the pistil at stages when style and stigma start to develop. Also detected in pedicels and at the base of petals and sepals.

Functionally, controls the proximal-distal patterning in petals and the adaxial-abaxial determination of leaves. Involved in the repression of the homeobox gene BP. This Arabidopsis thaliana (Mouse-ear cress) protein is LOB domain-containing protein 36 (LBD36).